Here is a 196-residue protein sequence, read N- to C-terminus: Ribosome maturation factor RimP (196 aa).

Belongs to the RimP family.

Its subcellular location is the cytoplasm. Its function is as follows. Required for maturation of 30S ribosomal subunits. The chain is Ribosome maturation factor RimP from Dinoroseobacter shibae (strain DSM 16493 / NCIMB 14021 / DFL 12).